The primary structure comprises 133 residues: Small ribosomal subunit protein uS9 (133 aa).

The span at 95–113 (GDSKQELKSRGFLTRDPRK) shows a compositional bias: basic and acidic residues. The interval 95-133 (GDSKQELKSRGFLTRDPRKKERKKYGHKKARKSFQFSKR) is disordered. The span at 114–133 (KERKKYGHKKARKSFQFSKR) shows a compositional bias: basic residues.

This sequence belongs to the universal ribosomal protein uS9 family.

This Chlamydia felis (strain Fe/C-56) (Chlamydophila felis) protein is Small ribosomal subunit protein uS9.